Consider the following 555-residue polypeptide: Formate--tetrahydrofolate ligase (555 aa).

Residue 65-72 (TPAGEGKT) coordinates ATP.

This sequence belongs to the formate--tetrahydrofolate ligase family.

The catalysed reaction is (6S)-5,6,7,8-tetrahydrofolate + formate + ATP = (6R)-10-formyltetrahydrofolate + ADP + phosphate. It functions in the pathway one-carbon metabolism; tetrahydrofolate interconversion. The polypeptide is Formate--tetrahydrofolate ligase (Paracoccus denitrificans (strain Pd 1222)).